The primary structure comprises 428 residues: Secernin-2 (428 aa).

Residue Cys-10 is part of the active site.

Belongs to the peptidase C69 family. Secernin subfamily.

The sequence is that of Secernin-2 (scrn2) from Xenopus laevis (African clawed frog).